Reading from the N-terminus, the 241-residue chain is Fatty acid metabolism regulator protein (241 aa).

An HTH gntR-type domain is found at 11–79; it reads QSPAALAEEY…HGKPTKVNNI (69 aa). Residues 39–58 constitute a DNA-binding region (H-T-H motif); it reads ERDLADKIGVTRTTLREVLQ.

As to quaternary structure, homodimer.

It localises to the cytoplasm. Its function is as follows. Multifunctional regulator of fatty acid metabolism. The polypeptide is Fatty acid metabolism regulator protein (Haemophilus influenzae (strain ATCC 51907 / DSM 11121 / KW20 / Rd)).